An 87-amino-acid chain; its full sequence is Small ribosomal subunit protein bS18 (87 aa).

Positions Met-1–Arg-19 are enriched in basic residues. The interval Met-1 to Val-25 is disordered.

The protein belongs to the bacterial ribosomal protein bS18 family. Part of the 30S ribosomal subunit. Forms a tight heterodimer with protein bS6.

Binds as a heterodimer with protein bS6 to the central domain of the 16S rRNA, where it helps stabilize the platform of the 30S subunit. The sequence is that of Small ribosomal subunit protein bS18 from Rhodopirellula baltica (strain DSM 10527 / NCIMB 13988 / SH1).